The following is a 336-amino-acid chain: Nicotinate-nucleotide--dimethylbenzimidazole phosphoribosyltransferase (336 aa).

Glu-304 (proton acceptor) is an active-site residue.

This sequence belongs to the CobT family.

The enzyme catalyses 5,6-dimethylbenzimidazole + nicotinate beta-D-ribonucleotide = alpha-ribazole 5'-phosphate + nicotinate + H(+). The protein operates within nucleoside biosynthesis; alpha-ribazole biosynthesis; alpha-ribazole from 5,6-dimethylbenzimidazole: step 1/2. Functionally, catalyzes the synthesis of alpha-ribazole-5'-phosphate from nicotinate mononucleotide (NAMN) and 5,6-dimethylbenzimidazole (DMB). The polypeptide is Nicotinate-nucleotide--dimethylbenzimidazole phosphoribosyltransferase (Ruegeria sp. (strain TM1040) (Silicibacter sp.)).